A 131-amino-acid chain; its full sequence is Inner membrane protein YecN (131 aa).

The Cytoplasmic portion of the chain corresponds to 1-107; sequence MVSALYAVLS…RWRRSGMSAT (107 aa). The helical transmembrane segment at 108–128 threads the bilayer; sequence WCALLLMVLANLWYMPWELVF. Residues 129 to 131 lie on the Periplasmic side of the membrane; it reads SLR.

The protein resides in the cell inner membrane. This chain is Inner membrane protein YecN (yecN), found in Escherichia coli O6:H1 (strain CFT073 / ATCC 700928 / UPEC).